A 228-amino-acid chain; its full sequence is Putative N-acetylmannosamine-6-phosphate 2-epimerase (228 aa).

Belongs to the NanE family.

The enzyme catalyses an N-acyl-D-glucosamine 6-phosphate = an N-acyl-D-mannosamine 6-phosphate. Its pathway is amino-sugar metabolism; N-acetylneuraminate degradation; D-fructose 6-phosphate from N-acetylneuraminate: step 3/5. In terms of biological role, converts N-acetylmannosamine-6-phosphate (ManNAc-6-P) to N-acetylglucosamine-6-phosphate (GlcNAc-6-P). The sequence is that of Putative N-acetylmannosamine-6-phosphate 2-epimerase from Lactiplantibacillus plantarum (strain ATCC BAA-793 / NCIMB 8826 / WCFS1) (Lactobacillus plantarum).